A 225-amino-acid polypeptide reads, in one-letter code: PKHD-type hydroxylase Smlt1146 (225 aa).

One can recognise a Fe2OG dioxygenase domain in the interval 78 to 177 (KYLPPRFNRY…RVASFFWVQS (100 aa)). Residues His96, Asp98, and His158 each coordinate Fe cation. A 2-oxoglutarate-binding site is contributed by Arg168.

It depends on Fe(2+) as a cofactor. L-ascorbate serves as cofactor.

The protein is PKHD-type hydroxylase Smlt1146 of Stenotrophomonas maltophilia (strain K279a).